We begin with the raw amino-acid sequence, 328 residues long: Cytochrome f (328 aa).

The first 44 residues, 1–44 (MRNPDTLGLWTKTMVALRRFTVLAIATVSVFLITDLGLPQAASA), serve as a signal peptide directing secretion. Residues Tyr-45, Cys-66, Cys-69, and His-70 each coordinate heme. The helical transmembrane segment at 296 to 313 (FLVLFLAGIMLSQILLVL) threads the bilayer.

It belongs to the cytochrome f family. The 4 large subunits of the cytochrome b6-f complex are cytochrome b6, subunit IV (17 kDa polypeptide, PetD), cytochrome f and the Rieske protein, while the 4 small subunits are PetG, PetL, PetM and PetN. The complex functions as a dimer. The cofactor is heme.

It localises to the cellular thylakoid membrane. Functionally, component of the cytochrome b6-f complex, which mediates electron transfer between photosystem II (PSII) and photosystem I (PSI), cyclic electron flow around PSI, and state transitions. This Synechocystis sp. (strain ATCC 27184 / PCC 6803 / Kazusa) protein is Cytochrome f (petA).